The primary structure comprises 224 residues: Large ribosomal subunit protein uL11c (224 aa).

A chloroplast-targeting transit peptide spans 1–66 (MAQPLVAAPS…SHRRLSIVAM (66 aa)). N6,N6,N6-trimethyllysine is present on residues Lys-75 and Lys-111.

As to quaternary structure, component of the chloroplast large ribosomal subunit (LSU). Mature 70S chloroplast ribosomes of higher plants consist of a small (30S) and a large (50S) subunit. The 30S small subunit contains 1 molecule of ribosomal RNA (16S rRNA) and 24 different proteins. The 50S large subunit contains 3 rRNA molecules (23S, 5S and 4.5S rRNA) and 33 different proteins.

The protein resides in the plastid. The protein localises to the chloroplast. In terms of biological role, component of the chloroplast ribosome (chloro-ribosome), a dedicated translation machinery responsible for the synthesis of chloroplast genome-encoded proteins, including proteins of the transcription and translation machinery and components of the photosynthetic apparatus. In Spinacia oleracea (Spinach), this protein is Large ribosomal subunit protein uL11c (rpl11).